We begin with the raw amino-acid sequence, 69 residues long: Putative membrane protein insertion efficiency factor (69 aa).

Belongs to the UPF0161 family.

Its subcellular location is the cell inner membrane. Could be involved in insertion of integral membrane proteins into the membrane. This Azoarcus sp. (strain BH72) protein is Putative membrane protein insertion efficiency factor.